Reading from the N-terminus, the 147-residue chain is Small ribosomal subunit protein bS16 (147 aa).

The tract at residues 89–147 (AWTHGNNPKKAEPGKKAQERAKERADKAEAKAAAAAEAAAAPAEEAPAEAAPAEETSES) is disordered. Residues 97–118 (KKAEPGKKAQERAKERADKAEA) show a composition bias toward basic and acidic residues. The span at 119–147 (KAAAAAEAAAAPAEEAPAEAAPAEETSES) shows a compositional bias: low complexity.

The protein belongs to the bacterial ribosomal protein bS16 family.

The sequence is that of Small ribosomal subunit protein bS16 from Hyphomonas neptunium (strain ATCC 15444).